The following is a 315-amino-acid chain: Small ribosomal subunit biogenesis GTPase RsgA (315 aa).

Residues 82–246 (DQFKSKVLAA…LIDSPGFQEF (165 aa)) form the CP-type G domain. Residues 130–133 (NKID) and 184–192 (GQSGMGKSS) each bind GTP. 4 residues coordinate Zn(2+): Cys-270, Cys-275, His-277, and Cys-283.

Belongs to the TRAFAC class YlqF/YawG GTPase family. RsgA subfamily. In terms of assembly, monomer. Associates with 30S ribosomal subunit, binds 16S rRNA. It depends on Zn(2+) as a cofactor.

It localises to the cytoplasm. One of several proteins that assist in the late maturation steps of the functional core of the 30S ribosomal subunit. Helps release RbfA from mature subunits. May play a role in the assembly of ribosomal proteins into the subunit. Circularly permuted GTPase that catalyzes slow GTP hydrolysis, GTPase activity is stimulated by the 30S ribosomal subunit. The protein is Small ribosomal subunit biogenesis GTPase RsgA of Ralstonia pickettii (strain 12J).